The primary structure comprises 471 residues: MENFKHLPEPFRIRVIEPVKRTTRAYREEAIIKSGMNPFLLDREDVFIDLLTDSGTGAVTQSMQAAMMRGDEAYSGSRSYYALAESVKNIFGYQYTIPTHQGRGAEQIYIPVLIKKREQEKGLDRSKMVAFSNYFFDTTQGHSQINGCTVRNVYIKEAFDTGVRYDFKGNFDLEGLERGIEEVGPNNVPYIVATITSNSAGGQPVSLANLKAMYSIAKKYDIPVVMDSARFAENAYFIKQREAEYKDWTIEQITRETYKYADMLAMSAKKDAMVPMGGLLCMKDDSFFDVYTECRTLCVVQEGFPTYGGLEGGAMERLAVGLYDGMNLDWLAYRIAQVQYLVDGLEEIGVVCQQAGGHAAFVDAGKLLPHIPADQFPAQALACELYKVAGIRAVEIGSFLLGRDPKTGKQLPCPAELLRLTIPRATYTQTHMDFIIEAFKHVKENAANIKGLTFTYEPKVLRHFTAKLKEV.

3 positions are modified to N6-acetyllysine: K5, K115, and K156. Position 270 is an N6-(pyridoxal phosphate)lysine (K270). N6-acetyllysine is present on K450.

It belongs to the beta-eliminating lyase family. Homotetramer. It depends on pyridoxal 5'-phosphate as a cofactor.

It carries out the reaction L-tryptophan + H2O = indole + pyruvate + NH4(+). Its pathway is amino-acid degradation; L-tryptophan degradation via pyruvate pathway; indole and pyruvate from L-tryptophan: step 1/1. The polypeptide is Tryptophanase (Shigella boydii serotype 18 (strain CDC 3083-94 / BS512)).